A 139-amino-acid chain; its full sequence is Nucleoside diphosphate kinase (139 aa).

Positions 10, 58, 86, 92, 104, and 114 each coordinate ATP. Catalysis depends on H117, which acts as the Pros-phosphohistidine intermediate.

It belongs to the NDK family. In terms of assembly, homotetramer. The cofactor is Mg(2+).

The protein localises to the cytoplasm. It catalyses the reaction a 2'-deoxyribonucleoside 5'-diphosphate + ATP = a 2'-deoxyribonucleoside 5'-triphosphate + ADP. It carries out the reaction a ribonucleoside 5'-diphosphate + ATP = a ribonucleoside 5'-triphosphate + ADP. Major role in the synthesis of nucleoside triphosphates other than ATP. The ATP gamma phosphate is transferred to the NDP beta phosphate via a ping-pong mechanism, using a phosphorylated active-site intermediate. This is Nucleoside diphosphate kinase from Rhodococcus jostii (strain RHA1).